The following is a 195-amino-acid chain: Protein Fer3 (195 aa).

2 disordered regions span residues 1-24 (MQHP…LWGQ) and 56-82 (PLVP…RRRV). Positions 63–75 (STNGRANGSSSSS) are enriched in low complexity. In terms of domain architecture, bHLH spans 86 to 138 (AQRRAANIRERRRMFNLNEAFDKLRRKVPTFAYEKRLSRIETLRLAITYIGFM). The tract at residues 145-175 (TPSNSHKSRSDVYGSMNGHHQAPPPAIHPHH) is disordered.

It localises to the nucleus. Its function is as follows. Transcription factor that binds to the E-box and functions as inhibitor of transcription. DNA binding requires dimerization with an E protein. Inhibits transcription activation by ASCL1/MASH1 by sequestering E proteins. This Drosophila melanogaster (Fruit fly) protein is Protein Fer3 (fer3).